The chain runs to 176 residues: Crossover junction endodeoxyribonuclease RuvC (176 aa).

Active-site residues include Asp10, Glu69, and Asp141. 3 residues coordinate Mg(2+): Asp10, Glu69, and Asp141.

This sequence belongs to the RuvC family. Homodimer which binds Holliday junction (HJ) DNA. The HJ becomes 2-fold symmetrical on binding to RuvC with unstacked arms; it has a different conformation from HJ DNA in complex with RuvA. In the full resolvosome a probable DNA-RuvA(4)-RuvB(12)-RuvC(2) complex forms which resolves the HJ. The cofactor is Mg(2+).

The protein localises to the cytoplasm. It catalyses the reaction Endonucleolytic cleavage at a junction such as a reciprocal single-stranded crossover between two homologous DNA duplexes (Holliday junction).. Functionally, the RuvA-RuvB-RuvC complex processes Holliday junction (HJ) DNA during genetic recombination and DNA repair. Endonuclease that resolves HJ intermediates. Cleaves cruciform DNA by making single-stranded nicks across the HJ at symmetrical positions within the homologous arms, yielding a 5'-phosphate and a 3'-hydroxyl group; requires a central core of homology in the junction. The consensus cleavage sequence is 5'-(A/T)TT(C/G)-3'. Cleavage occurs on the 3'-side of the TT dinucleotide at the point of strand exchange. HJ branch migration catalyzed by RuvA-RuvB allows RuvC to scan DNA until it finds its consensus sequence, where it cleaves and resolves the cruciform DNA. The polypeptide is Crossover junction endodeoxyribonuclease RuvC (Dichelobacter nodosus (strain VCS1703A)).